The chain runs to 347 residues: uncharacterized protein (347 aa).

This is an uncharacterized protein from Mycoplasma genitalium (strain ATCC 33530 / DSM 19775 / NCTC 10195 / G37) (Mycoplasmoides genitalium).